Consider the following 303-residue polypeptide: Methionyl-tRNA formyltransferase (303 aa).

Residue 108-111 (SDLP) participates in (6S)-5,6,7,8-tetrahydrofolate binding.

It belongs to the Fmt family.

The enzyme catalyses L-methionyl-tRNA(fMet) + (6R)-10-formyltetrahydrofolate = N-formyl-L-methionyl-tRNA(fMet) + (6S)-5,6,7,8-tetrahydrofolate + H(+). In terms of biological role, attaches a formyl group to the free amino group of methionyl-tRNA(fMet). The formyl group appears to play a dual role in the initiator identity of N-formylmethionyl-tRNA by promoting its recognition by IF2 and preventing the misappropriation of this tRNA by the elongation apparatus. This Rickettsia canadensis (strain McKiel) protein is Methionyl-tRNA formyltransferase.